The primary structure comprises 527 residues: Secologanin synthase 2 (527 aa).

At methionine 1–alanine 11 the chain is on the lumenal side. A helical membrane pass occupies residues isoleucine 12–tryptophan 32. At phenylalanine 33–phenylalanine 527 the chain is on the cytoplasmic side. Cysteine 470 contacts heme.

This sequence belongs to the cytochrome P450 family. Requires heme as cofactor. In terms of tissue distribution, expressed in leaves (especially in leaf epidermis), and, to a lower extent, in roots, stems, flower buds and flowers.

The protein localises to the endoplasmic reticulum membrane. The enzyme catalyses loganin + reduced [NADPH--hemoprotein reductase] + O2 = secologanin + oxidized [NADPH--hemoprotein reductase] + 2 H2O + H(+). It carries out the reaction secologanin + reduced [NADPH--hemoprotein reductase] + O2 = secoxyloganin + oxidized [NADPH--hemoprotein reductase] + H2O + 2 H(+). Its pathway is alkaloid biosynthesis. In terms of biological role, component of the seco-iridoid and derivatives monoterpenoid indole alkaloids (MIAs, e.g. secologanin) biosynthesis pathway. Catalyzes the conversion of loganin into secologanin. Catalyzes the conversion of secologanin into secoxyloganin. The polypeptide is Secologanin synthase 2 (Catharanthus roseus (Madagascar periwinkle)).